We begin with the raw amino-acid sequence, 569 residues long: Phosphoglucomutase 2 (569 aa).

A disordered region spans residues 1-23 (MSFQIETVPTKPYEDQKPGTSGL). Ser2 carries the N-acetylserine modification. Arg24 is an alpha-D-glucose 1,6-bisphosphate binding site. Phosphothreonine occurs at positions 111 and 117. Alpha-D-glucose 1,6-bisphosphate is bound at residue Ser119. Catalysis depends on Ser119, which acts as the Phosphoserine intermediate. Mg(2+)-binding residues include Ser119, Asp290, Asp292, and Asp294. Ser119 bears the Phosphoserine mark. Alpha-D-glucose 1,6-bisphosphate is bound by residues Asp294, Arg295, Thr359, Glu378, Ser380, and Lys391.

This sequence belongs to the phosphohexose mutase family. In terms of assembly, monomer. The cofactor is Mg(2+). Zn(2+) serves as cofactor. O-glycosylated with mannose residues. Substrate of UDP-glucose--glycoprotein glucose phosphotransferase, linking glucose in a phosphodiester linkage to O-linked mannose.

Its subcellular location is the cytoplasm. The enzyme catalyses alpha-D-glucose 1-phosphate = alpha-D-glucose 6-phosphate. It catalyses the reaction O-phospho-L-seryl-[protein] + alpha-D-glucose 1-phosphate = alpha-D-glucose 1,6-bisphosphate + L-seryl-[protein]. The catalysed reaction is alpha-D-glucose 1,6-bisphosphate + L-seryl-[protein] = O-phospho-L-seryl-[protein] + alpha-D-glucose 6-phosphate. In terms of biological role, major phosphoglucomutase isozyme that catalyzes the reversible isomerization of alpha-D-glucose 1-phosphate to alpha-D-glucose 6-phosphate. The mechanism proceeds via the intermediate compound alpha-D-glucose 1,6-bisphosphate. Constitutes about 80-90% of the phosphoglucomutase activity in the cell. Key enzyme in hexose metabolism. The forward reaction is an essential step in the energy metabolism of galactose since the product of the galactose pathway enzymes in yeast is glucose 1-phosphate. The reverse reaction is an essential step for biosynthesis when carbon sources other than galactose are the energy source because glucose 1-phosphate is the starting point for the synthesis of UDP-glucose, which acts as a precursor for the synthesis of oligosaccharides and trehalose. The chain is Phosphoglucomutase 2 from Saccharomyces cerevisiae (strain ATCC 204508 / S288c) (Baker's yeast).